We begin with the raw amino-acid sequence, 378 residues long: UPF0754 membrane protein BCE33L0760 (378 aa).

2 helical membrane passes run 1 to 21 and 357 to 377; these read MNIW…GGFT and YLGA…LLFL.

It belongs to the UPF0754 family.

It is found in the cell membrane. The protein is UPF0754 membrane protein BCE33L0760 of Bacillus cereus (strain ZK / E33L).